The sequence spans 70 residues: Melittin-N (70 aa).

The signal sequence occupies residues 1–21 (MKFLVNVALVFMVVYISYIYA). A propeptide spans 22–43 (APEPEPAPEPEAEADAEADPEA) (removed by a dipeptidylpeptidase). N-formylglycine; partial is present on G44. Q69 is modified (glutamine amide).

It belongs to the melittin family. In terms of assembly, monomer (in solution and for integration into membranes), homotetramer (in solution and potentially as a toroidal pore in membranes), and potenially homomultimer (as a toroidal pore in membranes). In terms of tissue distribution, expressed by the venom gland.

The protein localises to the secreted. It localises to the target cell membrane. Its function is as follows. Main toxin of bee venom with strong hemolytic activity and antimicrobial activity. It has enhancing effects on bee venom phospholipase A2 activity. This amphipathic toxin binds to negatively charged membrane surface and forms pore by inserting into lipid bilayers inducing the leakage of ions and molecules and the enhancement of permeability that ultimately leads to cell lysis. It acts as a voltage-gated pore with higher selectivity for anions over cations. The ion conductance has been shown to be voltage-dependent. Self-association of melittin in membranes is promoted by high ionic strength, but not by the presence of negatively charged lipids. In vivo, intradermal injection into healthy human volunteers produce sharp pain sensation and an inflammatory response. It produces pain by activating primary nociceptor cells directly and indirectly due to its ability to activate plasma membrane phospholipase A2 and its pore-forming activity. Shows lower cytotoxicity when tested on E.coli and cancer cell lines than melittin, as well as lower anti-inflammatory properties and lower properties to interact to small unilamellar liposomes. This is Melittin-N (MELT) from Apis cerana (Indian honeybee).